The following is a 188-amino-acid chain: Probable thymidylate kinase (188 aa).

ATP is bound at residue 11–18; the sequence is GIDGSGKT.

This sequence belongs to the thymidylate kinase family.

The enzyme catalyses dTMP + ATP = dTDP + ADP. This is Probable thymidylate kinase (tmk) from Methanocaldococcus jannaschii (strain ATCC 43067 / DSM 2661 / JAL-1 / JCM 10045 / NBRC 100440) (Methanococcus jannaschii).